The following is a 430-amino-acid chain: Potassium channel subfamily K member 12 (430 aa).

At 1-38 (MSSRSPRPPPRRSRRRLPRPSCCCCCCRRSHLNEDTGR) the chain is on the cytoplasmic side. Residues 11–16 (RRSRRR) form an ER retention/retrieval signal region. The chain crosses the membrane as a helical span at residues 39–59 (FVLLAALIGLYLVAGATVFSA). N-linked (GlcNAc...) asparagine glycosylation is present at N78. An intramembrane region (pore-forming) is located at residues 114–134 (WDFPGAFYFVGTVVSTIGFGM). 3 residues coordinate K(+): T129, I130, and G131. The selectivity filter 1 stretch occupies residues 129 to 134 (TIGFGM). A helical transmembrane segment spans residues 145-165 (FLIAYGLFGCAGTILFFNLFL). At 166-212 (ERIISLLAFIMRACRERQLRRSGLLPATFRRGSALSEADSLAGWKPS) the chain is on the cytoplasmic side. The helical transmembrane segment at 213 to 233 (VYHVLLILGLFAVLLSCCASA) threads the bilayer. Positions 243–263 (YVDSLYFCFVTFSTIGFGDLV) form an intramembrane region, pore-forming. K(+) contacts are provided by T256, I257, G258, and F259. The tract at residues 256-261 (TIGFGD) is selectivity filter 2. The chain crosses the membrane as a helical span at residues 282–302 (LFILLGVCCIYSLFNVISILI). Topologically, residues 303 to 430 (KQVLNWMLRK…NRLAETSASR (128 aa)) are cytoplasmic.

This sequence belongs to the two pore domain potassium channel (TC 1.A.1.8) family. As to quaternary structure, homodimer. Heterodimer with KCNK13.

The protein localises to the cell membrane. It is found in the endoplasmic reticulum membrane. The enzyme catalyses K(+)(in) = K(+)(out). Its function is as follows. K(+) channel subunit that may homo- and heterodimerize to form functional channels with distinct regulatory and gating properties. Can heterodimerize with KCNK13 subunit to conduct K(+) outward rectifying currents at the plasma membrane. The homodimers are mainly retained in the endoplasmic reticulum compartment and may be targeted to the cell surface upon phosphorylation or other activation signals yet to be elucidated. In Homo sapiens (Human), this protein is Potassium channel subfamily K member 12.